The following is a 1175-amino-acid chain: 1-phosphatidylinositol 4,5-bisphosphate phosphodiesterase beta-4 (1175 aa).

A2 bears the N-acetylalanine mark. Positions 313–463 (QEMDHPLAHY…LKRKILIKNK (151 aa)) constitute a PI-PLC X-box domain. Active-site residues include H328 and H375. The interval 487–512 (AAPASILEDDNEEEIESADQEEEAHP) is disordered. The segment covering 493 to 508 (LEDDNEEEIESADQEE) has biased composition (acidic residues). The PI-PLC Y-box domain maps to 565–681 (LSTMINYAQP…GYLLKPDFMR (117 aa)). One can recognise a C2 domain in the interval 684–809 (DRTFDPFSET…SLRNEGNKPL (126 aa)). Disordered stretches follow at residues 860 to 904 (SDIA…LGSG) and 1082 to 1110 (KISM…VREL). Polar residues-rich tracts occupy residues 885 to 900 (VTPQ…TTAA) and 1085 to 1094 (MENSKAISQD). Position 886 is a phosphothreonine (T886). A compositionally biased stretch (basic and acidic residues) spans 1095 to 1109 (KSIKNKAERERRVRE).

Ca(2+) is required as a cofactor. Preferentially expressed in the retina.

Its subcellular location is the cell membrane. The catalysed reaction is a 1,2-diacyl-sn-glycero-3-phospho-(1D-myo-inositol-4,5-bisphosphate) + H2O = 1D-myo-inositol 1,4,5-trisphosphate + a 1,2-diacyl-sn-glycerol + H(+). It carries out the reaction a 1,2-diacyl-sn-glycero-3-phospho-(1D-myo-inositol) + H2O = 1D-myo-inositol 1-phosphate + a 1,2-diacyl-sn-glycerol + H(+). Functionally, activated phosphatidylinositol-specific phospholipase C enzymes catalyze the production of the second messenger molecules diacylglycerol (DAG) and inositol 1,4,5-trisphosphate (IP3) involved in G-protein coupled receptor signaling pathways. PLCB4 is a direct effector of the endothelin receptor signaling pathway that plays an essential role in lower jaw and middle ear structures development. This is 1-phosphatidylinositol 4,5-bisphosphate phosphodiesterase beta-4 from Rattus norvegicus (Rat).